The chain runs to 194 residues: Pyridoxine/pyridoxamine 5'-phosphate oxidase (194 aa).

Residues 42-47 (RVVLLK), 57-58 (FT), Arg63, Lys64, and Gln86 contribute to the FMN site. Substrate is bound at residue Lys47. Residues Tyr104, Arg108, and Ser112 each contribute to the substrate site. Residues 121–122 (QS) and Trp166 contribute to the FMN site. 172–174 (RIH) serves as a coordination point for substrate. Arg176 lines the FMN pocket.

This sequence belongs to the pyridoxamine 5'-phosphate oxidase family. As to quaternary structure, homodimer. The cofactor is FMN.

The enzyme catalyses pyridoxamine 5'-phosphate + O2 + H2O = pyridoxal 5'-phosphate + H2O2 + NH4(+). It carries out the reaction pyridoxine 5'-phosphate + O2 = pyridoxal 5'-phosphate + H2O2. It functions in the pathway cofactor metabolism; pyridoxal 5'-phosphate salvage; pyridoxal 5'-phosphate from pyridoxamine 5'-phosphate: step 1/1. It participates in cofactor metabolism; pyridoxal 5'-phosphate salvage; pyridoxal 5'-phosphate from pyridoxine 5'-phosphate: step 1/1. Functionally, catalyzes the oxidation of either pyridoxine 5'-phosphate (PNP) or pyridoxamine 5'-phosphate (PMP) into pyridoxal 5'-phosphate (PLP). The protein is Pyridoxine/pyridoxamine 5'-phosphate oxidase of Ehrlichia ruminantium (strain Welgevonden).